The chain runs to 988 residues: Ephrin type-B receptor 3 (988 aa).

The segment at 1 to 24 is disordered; that stretch reads GVSSRARRPPGSSRSSRRGVTSEL. Over 1–534 the chain is Extracellular; that stretch reads GVSSRARRPP…TSKTFQELPL (534 aa). Positions 11–189 constitute an Eph LBD domain; it reads GSSRSSRRGV…FYKKCSNTIA (179 aa). Cysteine 53 and cysteine 171 are disulfide-bonded. 2 Fibronectin type-III domains span residues 311–424 and 425–522; these read VPSA…TNQA and APSA…TAED. N-linked (GlcNAc...) asparagine glycosylation is found at asparagine 323 and asparagine 418. A helical transmembrane segment spans residues 535 to 555; the sequence is IVGSATAGLLFVIVVVIIAIV. The Cytoplasmic segment spans residues 556 to 988; the sequence is CFRKGMVTEQ…QMNQTLPVQV (433 aa). Tyrosine 604 is subject to Phosphotyrosine; by autocatalysis. Residues 623–886 form the Protein kinase domain; that stretch reads VKIEEVIGAG…QIVNTLDKLI (264 aa). Residues 629–637 and lysine 655 each bind ATP; that span reads IGAGEFGEV. Aspartate 748 (proton acceptor) is an active-site residue. The region spanning 915-979 is the SAM domain; it reads TTFTTVGDWL…LSSIQDMRLQ (65 aa). Residues 986–988 carry the PDZ-binding motif; sequence VQV.

Belongs to the protein kinase superfamily. Tyr protein kinase family. Ephrin receptor subfamily. As to quaternary structure, heterotetramer upon binding of the ligand. The heterotetramer is composed of an ephrin dimer and a receptor dimer. Oligomerization is probably required to induce biological responses. Post-translationally, phosphorylated. Autophosphorylates upon ligand-binding. Autophosphorylation on Tyr-604 is required for interaction with SH2 domain-containing proteins. As to expression, present in 10-day embryonic brain and body tissues. Prominent expression in kidney. Lower expression in lung, and barely detectable in brain, liver, heart, skeletal muscle and thymus.

Its subcellular location is the cell membrane. The protein resides in the cell projection. It is found in the dendrite. The catalysed reaction is L-tyrosyl-[protein] + ATP = O-phospho-L-tyrosyl-[protein] + ADP + H(+). In terms of biological role, receptor tyrosine kinase which binds promiscuously transmembrane ephrin-B family ligands residing on adjacent cells, leading to contact-dependent bidirectional signaling into neighboring cells. The signaling pathway downstream of the receptor is referred to as forward signaling while the signaling pathway downstream of the ephrin ligand is referred to as reverse signaling. Generally has an overlapping and redundant function with EPHB2. Like EPHB2, functions in axon guidance during development. In addition to its role in axon guidance also plays an important redundant role with other ephrin-B receptors in development and maturation of dendritic spines and the formation of excitatory synapses. May control other aspects of development through regulation of cell migration and positioning. This is Ephrin type-B receptor 3 (EPHB3) from Gallus gallus (Chicken).